The chain runs to 307 residues: Acetyl-coenzyme A carboxylase carboxyl transferase subunit beta (307 aa).

The 270-residue stretch at 25–294 (VWTKCTSCEQ…PLVVPIEQPK (270 aa)) folds into the CoA carboxyltransferase N-terminal domain. Zn(2+) is bound by residues Cys29, Cys32, Cys48, and Cys51. The C4-type zinc-finger motif lies at 29–51 (CTSCEQVLYHADLERNLEVCPKC).

Belongs to the AccD/PCCB family. Acetyl-CoA carboxylase is a heterohexamer composed of biotin carboxyl carrier protein (AccB), biotin carboxylase (AccC) and two subunits each of ACCase subunit alpha (AccA) and ACCase subunit beta (AccD). It depends on Zn(2+) as a cofactor.

It is found in the cytoplasm. It catalyses the reaction N(6)-carboxybiotinyl-L-lysyl-[protein] + acetyl-CoA = N(6)-biotinyl-L-lysyl-[protein] + malonyl-CoA. The protein operates within lipid metabolism; malonyl-CoA biosynthesis; malonyl-CoA from acetyl-CoA: step 1/1. Functionally, component of the acetyl coenzyme A carboxylase (ACC) complex. Biotin carboxylase (BC) catalyzes the carboxylation of biotin on its carrier protein (BCCP) and then the CO(2) group is transferred by the transcarboxylase to acetyl-CoA to form malonyl-CoA. This chain is Acetyl-coenzyme A carboxylase carboxyl transferase subunit beta, found in Photobacterium profundum (strain SS9).